We begin with the raw amino-acid sequence, 285 residues long: Baculoviral IAP repeat-containing protein 7 (285 aa).

The interval 18–47 (ESRARDSVRGPELSHREDGSGRTQEQDKPH) is disordered. The segment covering 19 to 47 (SRARDSVRGPELSHREDGSGRTQEQDKPH) has biased composition (basic and acidic residues). The BIR repeat unit spans residues 96-161 (RLASFYDWPS…RWFPRCQFLL (66 aa)). Residues Cys130, Cys133, His150, and Cys157 each coordinate Zn(2+). The disordered stretch occupies residues 184 to 225 (QREEPEDAVSATPSAPAHGSPELLRSRRETQPEDVSEPGAKD). The segment at 239–273 (CKVCLDRAVSIVFVPCGHFVCTECAPNLQLCPICR) adopts an RING-type zinc-finger fold.

This sequence belongs to the IAP family. Binds to caspase-9. Interaction with DIABLO/SMAC via the BIR domain disrupts binding to caspase-9 and apoptotic suppressor activity. Interacts with TAB1. In vitro, interacts with caspase-3 and caspase-7 via its BIR domain. Autoubiquitinated and undergoes proteasome-mediated degradation. Post-translationally, the truncated protein (tLivin) not only loses its anti-apoptotic effect but also acquires a pro-apoptotic effect.

The protein resides in the nucleus. It localises to the cytoplasm. Its subcellular location is the golgi apparatus. It carries out the reaction S-ubiquitinyl-[E2 ubiquitin-conjugating enzyme]-L-cysteine + [acceptor protein]-L-lysine = [E2 ubiquitin-conjugating enzyme]-L-cysteine + N(6)-ubiquitinyl-[acceptor protein]-L-lysine.. In terms of biological role, apoptotic regulator capable of exerting proapoptotic and anti-apoptotic activities and plays crucial roles in apoptosis, cell proliferation, and cell cycle control. Its anti-apoptotic activity is mediated through the inhibition of CASP3, CASP7 and CASP9, as well as by its E3 ubiquitin-protein ligase activity. As it is a weak caspase inhibitor, its anti-apoptotic activity is thought to be due to its ability to ubiquitinate DIABLO/SMAC targeting it for degradation thereby promoting cell survival. May contribute to caspase inhibition, by blocking the ability of DIABLO/SMAC to disrupt XIAP/BIRC4-caspase interactions. Protects against apoptosis induced by TNF or by chemical agents such as adriamycin, etoposide or staurosporine. Suppression of apoptosis is mediated by activation of MAPK8/JNK1, and possibly also of MAPK9/JNK2. This activation depends on TAB1 and MAP3K7/TAK1. In vitro, inhibits CASP3 and proteolytic activation of pro-CASP9. The protein is Baculoviral IAP repeat-containing protein 7 (Birc7) of Mus musculus (Mouse).